A 172-amino-acid polypeptide reads, in one-letter code: 3-hydroxydecanoyl-[acyl-carrier-protein] dehydratase (172 aa).

H71 is an active-site residue.

Belongs to the thioester dehydratase family. FabA subfamily. Homodimer.

It is found in the cytoplasm. It carries out the reaction a (3R)-hydroxyacyl-[ACP] = a (2E)-enoyl-[ACP] + H2O. The catalysed reaction is (3R)-hydroxydecanoyl-[ACP] = (2E)-decenoyl-[ACP] + H2O. The enzyme catalyses (2E)-decenoyl-[ACP] = (3Z)-decenoyl-[ACP]. Its pathway is lipid metabolism; fatty acid biosynthesis. Its function is as follows. Necessary for the introduction of cis unsaturation into fatty acids. Catalyzes the dehydration of (3R)-3-hydroxydecanoyl-ACP to E-(2)-decenoyl-ACP and then its isomerization to Z-(3)-decenoyl-ACP. Can catalyze the dehydratase reaction for beta-hydroxyacyl-ACPs with saturated chain lengths up to 16:0, being most active on intermediate chain length. The chain is 3-hydroxydecanoyl-[acyl-carrier-protein] dehydratase from Brucella anthropi (strain ATCC 49188 / DSM 6882 / CCUG 24695 / JCM 21032 / LMG 3331 / NBRC 15819 / NCTC 12168 / Alc 37) (Ochrobactrum anthropi).